The primary structure comprises 166 residues: Large ribosomal subunit protein uL10 (166 aa).

The protein belongs to the universal ribosomal protein uL10 family. As to quaternary structure, part of the ribosomal stalk of the 50S ribosomal subunit. The N-terminus interacts with L11 and the large rRNA to form the base of the stalk. The C-terminus forms an elongated spine to which L12 dimers bind in a sequential fashion forming a multimeric L10(L12)X complex.

Functionally, forms part of the ribosomal stalk, playing a central role in the interaction of the ribosome with GTP-bound translation factors. The polypeptide is Large ribosomal subunit protein uL10 (Pseudomonas syringae pv. syringae (strain B728a)).